The sequence spans 130 residues: Cytochrome b-c1 complex subunit 7 (130 aa).

This sequence belongs to the UQCRB/QCR7 family. In terms of assembly, component of the ubiquinol-cytochrome c oxidoreductase (cytochrome b-c1 complex, complex III, CIII), a multisubunit enzyme composed of 3 respiratory subunits cytochrome b, cytochrome c1 and Rieske protein, 2 core protein subunits, and additional low-molecular weight protein subunits. The complex exists as an obligatory dimer and forms supercomplexes (SCs) in the inner mitochondrial membrane with cytochrome c oxidase (complex IV, CIV).

The protein resides in the mitochondrion inner membrane. Component of the ubiquinol-cytochrome c oxidoreductase, a multisubunit transmembrane complex that is part of the mitochondrial electron transport chain which drives oxidative phosphorylation. The respiratory chain contains 3 multisubunit complexes succinate dehydrogenase (complex II, CII), ubiquinol-cytochrome c oxidoreductase (cytochrome b-c1 complex, complex III, CIII) and cytochrome c oxidase (complex IV, CIV), that cooperate to transfer electrons derived from NADH and succinate to molecular oxygen, creating an electrochemical gradient over the inner membrane that drives transmembrane transport and the ATP synthase. The cytochrome b-c1 complex catalyzes electron transfer from ubiquinol to cytochrome c, linking this redox reaction to translocation of protons across the mitochondrial inner membrane, with protons being carried across the membrane as hydrogens on the quinol. In the process called Q cycle, 2 protons are consumed from the matrix, 4 protons are released into the intermembrane space and 2 electrons are passed to cytochrome c. In Echinococcus multilocularis (Fox tapeworm), this protein is Cytochrome b-c1 complex subunit 7 (UBCRBP).